A 68-amino-acid polypeptide reads, in one-letter code: ATP synthase F(0) complex subunit 8 (68 aa).

Residues 8–21 (VWPTMITPMLLTLF) form a helical membrane-spanning segment. Residue Lys54 is modified to N6-acetyllysine; alternate. At Lys54 the chain carries N6-succinyllysine; alternate. Residue Lys57 is modified to N6-acetyllysine.

It belongs to the ATPase protein 8 family. Component of the ATP synthase complex composed at least of ATP5F1A/subunit alpha, ATP5F1B/subunit beta, ATP5MC1/subunit c (homooctomer), MT-ATP6/subunit a, MT-ATP8/subunit 8, ATP5ME/subunit e, ATP5MF/subunit f, ATP5MG/subunit g, ATP5MK/subunit k, ATP5MJ/subunit j, ATP5F1C/subunit gamma, ATP5F1D/subunit delta, ATP5F1E/subunit epsilon, ATP5PF/subunit F6, ATP5PB/subunit b, ATP5PD/subunit d, ATP5PO/subunit OSCP. ATP synthase complex consists of a soluble F(1) head domain (subunits alpha(3) and beta(3)) - the catalytic core - and a membrane F(0) domain - the membrane proton channel (subunits c, a, 8, e, f, g, k and j). These two domains are linked by a central stalk (subunits gamma, delta, and epsilon) rotating inside the F1 region and a stationary peripheral stalk (subunits F6, b, d, and OSCP). Interacts with PRICKLE3.

It is found in the mitochondrion membrane. Subunit 8, of the mitochondrial membrane ATP synthase complex (F(1)F(0) ATP synthase or Complex V) that produces ATP from ADP in the presence of a proton gradient across the membrane which is generated by electron transport complexes of the respiratory chain. ATP synthase complex consist of a soluble F(1) head domain - the catalytic core - and a membrane F(1) domain - the membrane proton channel. These two domains are linked by a central stalk rotating inside the F(1) region and a stationary peripheral stalk. During catalysis, ATP synthesis in the catalytic domain of F(1) is coupled via a rotary mechanism of the central stalk subunits to proton translocation. In vivo, can only synthesize ATP although its ATP hydrolase activity can be activated artificially in vitro. Part of the complex F(0) domain. The protein is ATP synthase F(0) complex subunit 8 of Homo sapiens (Human).